Here is a 278-residue protein sequence, read N- to C-terminus: Myb/SANT-like DNA-binding domain-containing protein 1 (278 aa).

A disordered region spans residues 1–27; it reads MVRGAGPGPSLSALSHPTGASGMAAAE. A Myb-like domain is found at 44-129; sequence RNWTDAEMRG…PDWPYYLAID (86 aa). Residues 138-168 are disordered; the sequence is SCDGKLPDSQPPGPSTSQTEASLSPPAKSTP.

In Homo sapiens (Human), this protein is Myb/SANT-like DNA-binding domain-containing protein 1 (MSANTD1).